A 780-amino-acid polypeptide reads, in one-letter code: Ino eighty subunit 1 (780 aa).

Disordered regions lie at residues Met-1–His-25 and Ala-563–Asn-780. Positions Ala-563–Ala-584 are enriched in basic and acidic residues. A compositionally biased stretch (basic residues) spans Ser-600–Ala-613. The segment covering Arg-614–Ser-635 has biased composition (low complexity). 2 stretches are compositionally biased toward acidic residues: residues Leu-676–Asp-686 and Asp-723–Asp-751.

In terms of assembly, component of the chromatin-remodeling INO80 complex.

Its subcellular location is the nucleus. In terms of biological role, probably involved in transcription regulation via its interaction with the INO80 complex, a chromatin-remodeling complex. The chain is Ino eighty subunit 1 from Emericella nidulans (strain FGSC A4 / ATCC 38163 / CBS 112.46 / NRRL 194 / M139) (Aspergillus nidulans).